The sequence spans 182 residues: MTTASPSQVRQNYHQDAEAAINRQINLELYASYVYLSMSCYFDRDDVALKNFAKYFLHQSHEEREHAEKLMKLQNQRGGRIFLQDIKKPDRDDWESGLNAMECALHLEKSVNQSLLELHKLATDKNDPHLCDFIETYYLSEQVKSIKELGDHVTNLRKMGAPEAGMAEYLFDKHTLGHGDES.

N-acetylmethionine is present on M1. T2 is subject to N-acetylthreonine; in Ferritin heavy chain, N-terminally processed. Positions 11–160 (QNYHQDAEAA…DHVTNLRKMG (150 aa)) constitute a Ferritin-like diiron domain. The Fe cation site is built by E28, E63, H66, E108, and Q142.

This sequence belongs to the ferritin family. Oligomer of 24 subunits. There are two types of subunits: L (light) chain and H (heavy) chain. The major chain can be light or heavy, depending on the species and tissue type. The functional molecule forms a roughly spherical shell with a diameter of 12 nm and contains a central cavity into which the insoluble mineral iron core is deposited. Interacts with NCOA4; NCOA4 promotes targeting of the iron-binding ferritin complex to autolysosomes following starvation or iron depletion.

The protein resides in the cytoplasm. The protein localises to the cytoplasmic vesicle. Its subcellular location is the autophagosome. It is found in the autolysosome. The catalysed reaction is 4 Fe(2+) + O2 + 4 H(+) = 4 Fe(3+) + 2 H2O. Stores iron in a soluble, non-toxic, readily available form. Important for iron homeostasis. Has ferroxidase activity. Iron is taken up in the ferrous form and deposited as ferric hydroxides after oxidation. Also plays a role in delivery of iron to cells. Mediates iron uptake in capsule cells of the developing kidney. Degraded to release iron upon autophagy activation by nutrient starvation. The protein is Ferritin heavy chain (Fth1) of Mus musculus (Mouse).